Reading from the N-terminus, the 438-residue chain is Methylenetetrahydrofolate--tRNA-(uracil-5-)-methyltransferase TrmFO 2 (438 aa).

FAD is bound at residue 9 to 14; that stretch reads GAGLAG.

The protein belongs to the MnmG family. TrmFO subfamily. FAD is required as a cofactor.

The protein localises to the cytoplasm. It carries out the reaction uridine(54) in tRNA + (6R)-5,10-methylene-5,6,7,8-tetrahydrofolate + NADH + H(+) = 5-methyluridine(54) in tRNA + (6S)-5,6,7,8-tetrahydrofolate + NAD(+). The catalysed reaction is uridine(54) in tRNA + (6R)-5,10-methylene-5,6,7,8-tetrahydrofolate + NADPH + H(+) = 5-methyluridine(54) in tRNA + (6S)-5,6,7,8-tetrahydrofolate + NADP(+). Functionally, catalyzes the folate-dependent formation of 5-methyl-uridine at position 54 (M-5-U54) in all tRNAs. This Mycoplasma mycoides subsp. mycoides SC (strain CCUG 32753 / NCTC 10114 / PG1) protein is Methylenetetrahydrofolate--tRNA-(uracil-5-)-methyltransferase TrmFO 2.